The primary structure comprises 202 residues: Small ribosomal subunit protein uS4 (202 aa).

Residues 15-42 (LGDLPGLTRKAAKRSYPPGQHGQARRKR) form a disordered region. The 63-residue stretch at 90–152 (NRLDNVCFRL…KCSKQLAEGN (63 aa)) folds into the S4 RNA-binding domain.

Belongs to the universal ribosomal protein uS4 family. Part of the 30S ribosomal subunit. Contacts protein S5. The interaction surface between S4 and S5 is involved in control of translational fidelity.

One of the primary rRNA binding proteins, it binds directly to 16S rRNA where it nucleates assembly of the body of the 30S subunit. Functionally, with S5 and S12 plays an important role in translational accuracy. This Synechococcus sp. (strain WH7803) protein is Small ribosomal subunit protein uS4.